We begin with the raw amino-acid sequence, 540 residues long: CTP synthase (540 aa).

The interval 1 to 265 is amidoligase domain; the sequence is MVRFIFITGG…DNKVLKFFNL (265 aa). Ser-13 is a CTP binding site. Ser-13 is a binding site for UTP. Residues 14–19 and Asp-71 each bind ATP; that span reads SLGKGL. Asp-71 and Glu-139 together coordinate Mg(2+). CTP is bound by residues 146–148, 186–191, and Lys-222; these read DIE and KTKPTQ. UTP contacts are provided by residues 186-191 and Lys-222; that span reads KTKPTQ. A Glutamine amidotransferase type-1 domain is found at 290-539; sequence RIAIIAKYHK…VEAAIKYNKN (250 aa). Residue Gly-352 coordinates L-glutamine. The Nucleophile; for glutamine hydrolysis role is filled by Cys-379. Residues 380–383, Glu-403, and Arg-467 each bind L-glutamine; that span reads LGMQ. Catalysis depends on residues His-512 and Glu-514.

The protein belongs to the CTP synthase family. As to quaternary structure, homotetramer.

It carries out the reaction UTP + L-glutamine + ATP + H2O = CTP + L-glutamate + ADP + phosphate + 2 H(+). The enzyme catalyses L-glutamine + H2O = L-glutamate + NH4(+). It catalyses the reaction UTP + NH4(+) + ATP = CTP + ADP + phosphate + 2 H(+). The protein operates within pyrimidine metabolism; CTP biosynthesis via de novo pathway; CTP from UDP: step 2/2. Allosterically activated by GTP, when glutamine is the substrate; GTP has no effect on the reaction when ammonia is the substrate. The allosteric effector GTP functions by stabilizing the protein conformation that binds the tetrahedral intermediate(s) formed during glutamine hydrolysis. Inhibited by the product CTP, via allosteric rather than competitive inhibition. Functionally, catalyzes the ATP-dependent amination of UTP to CTP with either L-glutamine or ammonia as the source of nitrogen. Regulates intracellular CTP levels through interactions with the four ribonucleotide triphosphates. This chain is CTP synthase, found in Rickettsia bellii (strain RML369-C).